The following is a 330-amino-acid chain: Acrylyl-CoA reductase AcuI (330 aa).

Residues Tyr44, 159-162 (AGGV), 181-183 (TGR), Arg201, Leu247, and Ser272 each bind NADP(+).

This sequence belongs to the zinc-containing alcohol dehydrogenase family. Acrylyl-CoA reductase subfamily. Homodimer.

It localises to the cytoplasm. It catalyses the reaction propanoyl-CoA + NADP(+) = acryloyl-CoA + NADPH + H(+). Functionally, probably catalyzes the NADPH-dependent reduction of acrylyl-CoA to propanoyl-CoA. Restores acrylate resistance when expressed in an E.coli strain K12 acuI deletion. In Ruegeria pomeroyi (strain ATCC 700808 / DSM 15171 / DSS-3) (Silicibacter pomeroyi), this protein is Acrylyl-CoA reductase AcuI (acuI).